The following is a 239-amino-acid chain: Small ribosomal subunit protein eS6A (239 aa).

2 positions are modified to phosphoserine: Ser235 and Ser236.

It belongs to the eukaryotic ribosomal protein eS6 family. Component of the small ribosomal subunit (SSU). Mature yeast ribosomes consist of a small (40S) and a large (60S) subunit. The 40S small subunit contains 1 molecule of ribosomal RNA (18S rRNA) and at least 33 different proteins. The large 60S subunit contains 3 rRNA molecules (25S, 5.8S and 5S rRNA) and at least 46 different proteins. Interacts with snoRNA U3. uS11 interacts with MPP10. Component of the ribosomal small subunit (SSU) processome composed of at least 40 protein subunits and snoRNA U3. Phosphorylated.

It localises to the cytoplasm. Functionally, component of the ribosome, a large ribonucleoprotein complex responsible for the synthesis of proteins in the cell. The small ribosomal subunit (SSU) binds messenger RNAs (mRNAs) and translates the encoded message by selecting cognate aminoacyl-transfer RNA (tRNA) molecules. The large subunit (LSU) contains the ribosomal catalytic site termed the peptidyl transferase center (PTC), which catalyzes the formation of peptide bonds, thereby polymerizing the amino acids delivered by tRNAs into a polypeptide chain. The nascent polypeptides leave the ribosome through a tunnel in the LSU and interact with protein factors that function in enzymatic processing, targeting, and the membrane insertion of nascent chains at the exit of the ribosomal tunnel. eS6 is involved in nucleolar processing of pre-18S ribosomal RNA and ribosome assembly. The polypeptide is Small ribosomal subunit protein eS6A (rps601) (Schizosaccharomyces pombe (strain 972 / ATCC 24843) (Fission yeast)).